The chain runs to 853 residues: uncharacterized protein (853 aa).

2 coiled-coil regions span residues 313–343 (RTDE…LKVA) and 480–528 (EGQV…SELI).

This is an uncharacterized protein from Ostreid herpesvirus 1 (isolate France) (OsHV-1).